The following is a 448-amino-acid chain: Proline iminopeptidase aneH (448 aa).

The AB hydrolase-1 domain occupies 64–191 (PWMLYLQGGP…VEVFIGGGPC (128 aa)). Ser-164 serves as the catalytic Nucleophile. Residue Asp-397 is part of the active site. His-425 serves as the catalytic Proton donor.

It belongs to the peptidase S33 family. As to quaternary structure, homooligomer.

The protein resides in the cytoplasm. The enzyme catalyses Release of N-terminal proline from a peptide.. Its pathway is secondary metabolite biosynthesis. Its function is as follows. Proline iminopeptidase; part of the gene cluster that mediates the biosynthesis of aculenes, a unique type of norsesquiterpenes that contain a nordaucane skeleton linked to an L-proline moiety and are of mixed biosynthetic origin. The pathway begins with the synthesis of dauca-4,7-diene by the terpene cyclase aneC using farnesyl pyrophosphate (FPP) as substrate. The cytochrome P450 monooxygenase aneF then performs the initial oxidation at C-12 of dauca-4,7-diene to yield asperaculane D. Asperaculane D is substrate of the cytochrome P450 monooxygenase aneD for C-10 hydroxylation to yield asperaculane E. The cytochrome P450 monooxygenase aneG then converts asperaculane E into aculene D via C-2 oxidation. The monomodular nonribosomal peptide synthtase aneB adenylates L-proline and the thiohydrolase aneE transfers this activated L-proline derivative to aculenes D and C to produce respectively aculenes B and A. The dioxygenase aneA converts aculene D into aculene C, and aculene B into aculene A by introducing the 5,6-alkene moiety. Asperculanes A, B, C and F, as well as 14-prolyl asperculane C, might be shunt products of the pathway. The protein is Proline iminopeptidase aneH of Aspergillus aculeatus (strain ATCC 16872 / CBS 172.66 / WB 5094).